A 220-amino-acid polypeptide reads, in one-letter code: RPA-interacting protein B (220 aa).

Residues 1 to 45 (MEAERRHRALYKGTTPPWKETYRKRCVERLKSNRSKLLDKFRQVG) are interaction with importin beta. Residues 49–165 (HGGVGGSFLV…QCGVYINTQS (117 aa)) are interaction with RPA1. An RIP-type zinc finger spans residues 138–213 (CPVCNRNYLT…ASLFMSCQEC (76 aa)).

Interacts directly with the RPA1 subunit of RPA complex. Interacts with importin beta, but not with importin alpha. Forms a complex with the RPA complex and importin beta, which is dissociated by Ran-GTP.

Its subcellular location is the nucleus. Mediates the import of RPA complex into the nucleus, via its interaction with importin beta. The polypeptide is RPA-interacting protein B (rpain-b) (Xenopus laevis (African clawed frog)).